The primary structure comprises 207 residues: Urease accessory protein UreG (207 aa).

Position 16–23 (16–23 (GPVGSGKT)) interacts with GTP.

The protein belongs to the SIMIBI class G3E GTPase family. UreG subfamily. As to quaternary structure, homodimer. UreD, UreF and UreG form a complex that acts as a GTP-hydrolysis-dependent molecular chaperone, activating the urease apoprotein by helping to assemble the nickel containing metallocenter of UreC. The UreE protein probably delivers the nickel.

Its subcellular location is the cytoplasm. In terms of biological role, facilitates the functional incorporation of the urease nickel metallocenter. This process requires GTP hydrolysis, probably effectuated by UreG. In Blochmanniella pennsylvanica (strain BPEN), this protein is Urease accessory protein UreG.